Consider the following 307-residue polypeptide: Quinolinate synthase (307 aa).

Residues His-23 and Ser-40 each coordinate iminosuccinate. A [4Fe-4S] cluster-binding site is contributed by Cys-86. Residues 112–114 (YVN) and Ser-129 contribute to the iminosuccinate site. [4Fe-4S] cluster is bound at residue Cys-173. Iminosuccinate is bound by residues 199–201 (HPE) and Thr-216. Cys-265 contacts [4Fe-4S] cluster.

The protein belongs to the quinolinate synthase family. Type 2 subfamily. The cofactor is [4Fe-4S] cluster.

It localises to the cytoplasm. It carries out the reaction iminosuccinate + dihydroxyacetone phosphate = quinolinate + phosphate + 2 H2O + H(+). It participates in cofactor biosynthesis; NAD(+) biosynthesis; quinolinate from iminoaspartate: step 1/1. Catalyzes the condensation of iminoaspartate with dihydroxyacetone phosphate to form quinolinate. This Methanocaldococcus jannaschii (strain ATCC 43067 / DSM 2661 / JAL-1 / JCM 10045 / NBRC 100440) (Methanococcus jannaschii) protein is Quinolinate synthase.